Reading from the N-terminus, the 386-residue chain is mRNA-capping enzyme subunit beta (386 aa).

The tract at residues 1–137 (MDIGKMINDD…TTTITGCPPS (137 aa)) is disordered. 2 stretches are compositionally biased toward polar residues: residues 20-32 (VKSLLNSPPTGLP) and 41-56 (KASSTSDLAQQLTNEM). Residues 57–67 (ESGEDDDDEDA) are compositionally biased toward acidic residues. Basic and acidic residues predominate over residues 93 to 115 (RHAERDHRPPPHRQDRRDPRMER).

The protein belongs to the fungal TPase family. Heterodimer. The mRNA-capping enzyme is composed of two separate chains alpha and beta, respectively a mRNA guanylyltransferase and an mRNA 5'-triphosphate monophosphatase. Requires Mg(2+) as cofactor.

The protein resides in the nucleus. The catalysed reaction is a 5'-end triphospho-ribonucleoside in mRNA + H2O = a 5'-end diphospho-ribonucleoside in mRNA + phosphate + H(+). Functionally, first step of mRNA capping. Converts the 5'-triphosphate end of a nascent mRNA chain into a diphosphate end. This is mRNA-capping enzyme subunit beta (CET1) from Yarrowia lipolytica (strain CLIB 122 / E 150) (Yeast).